Reading from the N-terminus, the 118-residue chain is Endoribonuclease MazF9 (118 aa).

It belongs to the PemK/MazF family. As to quaternary structure, forms a complex with cognate antitoxin MazE9.

Its function is as follows. Toxic component of a type II toxin-antitoxin (TA) system. Upon expression in E.coli and M.smegmatis inhibits cell growth and colony formation. Its toxic effect is neutralized by coexpression with cognate antitoxin MazE9. Acts as an mRNA interferase, specifically cleaving between U and C in UAC sequences. May cleave its cognate antitoxin's gene. In E.coli expression with non-cognate antitoxins VapB27 and VapB40 partially neutralizes the toxin. This is Endoribonuclease MazF9 (mazF9) from Mycobacterium tuberculosis (strain ATCC 25618 / H37Rv).